The following is a 421-amino-acid chain: ATP phosphoribosyltransferase regulatory subunit (421 aa).

The protein belongs to the class-II aminoacyl-tRNA synthetase family. HisZ subfamily. Heteromultimer composed of HisG and HisZ subunits.

The protein localises to the cytoplasm. Its pathway is amino-acid biosynthesis; L-histidine biosynthesis; L-histidine from 5-phospho-alpha-D-ribose 1-diphosphate: step 1/9. Functionally, required for the first step of histidine biosynthesis. May allow the feedback regulation of ATP phosphoribosyltransferase activity by histidine. The chain is ATP phosphoribosyltransferase regulatory subunit from Clostridium novyi (strain NT).